A 127-amino-acid chain; its full sequence is Small ribosomal subunit protein uS12 (127 aa).

Residue D89 is modified to 3-methylthioaspartic acid. The tract at residues 104–127 (TQGVKDRKQARSKYGTKRAKAGKK) is disordered. Basic residues predominate over residues 113 to 127 (ARSKYGTKRAKAGKK).

This sequence belongs to the universal ribosomal protein uS12 family. Part of the 30S ribosomal subunit. Contacts proteins S8 and S17. May interact with IF1 in the 30S initiation complex.

Its function is as follows. With S4 and S5 plays an important role in translational accuracy. Functionally, interacts with and stabilizes bases of the 16S rRNA that are involved in tRNA selection in the A site and with the mRNA backbone. Located at the interface of the 30S and 50S subunits, it traverses the body of the 30S subunit contacting proteins on the other side and probably holding the rRNA structure together. The combined cluster of proteins S8, S12 and S17 appears to hold together the shoulder and platform of the 30S subunit. The polypeptide is Small ribosomal subunit protein uS12 (Herminiimonas arsenicoxydans).